The primary structure comprises 50 residues: Protein PsbN (50 aa).

A helical membrane pass occupies residues valine 14–phenylalanine 34.

This sequence belongs to the PsbN family.

The protein resides in the cellular thylakoid membrane. In terms of biological role, may play a role in photosystem I and II biogenesis. This is Protein PsbN from Prochlorococcus marinus (strain MIT 9515).